The chain runs to 498 residues: Protein nucleotidyltransferase YdiU (498 aa).

Residues Gly88, Gly90, Arg91, Lys111, Asp123, Gly124, Arg174, and Arg181 each contribute to the ATP site. Residue Asp250 is the Proton acceptor of the active site. Mg(2+) is bound by residues Asn251 and Asp260. Asp260 lines the ATP pocket.

Belongs to the SELO family. Requires Mg(2+) as cofactor. Mn(2+) serves as cofactor.

The catalysed reaction is L-seryl-[protein] + ATP = 3-O-(5'-adenylyl)-L-seryl-[protein] + diphosphate. It catalyses the reaction L-threonyl-[protein] + ATP = 3-O-(5'-adenylyl)-L-threonyl-[protein] + diphosphate. It carries out the reaction L-tyrosyl-[protein] + ATP = O-(5'-adenylyl)-L-tyrosyl-[protein] + diphosphate. The enzyme catalyses L-histidyl-[protein] + UTP = N(tele)-(5'-uridylyl)-L-histidyl-[protein] + diphosphate. The catalysed reaction is L-seryl-[protein] + UTP = O-(5'-uridylyl)-L-seryl-[protein] + diphosphate. It catalyses the reaction L-tyrosyl-[protein] + UTP = O-(5'-uridylyl)-L-tyrosyl-[protein] + diphosphate. Nucleotidyltransferase involved in the post-translational modification of proteins. It can catalyze the addition of adenosine monophosphate (AMP) or uridine monophosphate (UMP) to a protein, resulting in modifications known as AMPylation and UMPylation. The chain is Protein nucleotidyltransferase YdiU from Methylorubrum populi (strain ATCC BAA-705 / NCIMB 13946 / BJ001) (Methylobacterium populi).